The chain runs to 293 residues: Homeobox protein ceh-24 (293 aa).

Composition is skewed to basic and acidic residues over residues 1–15 and 22–38; these read MSEKESPSPQHKKDE and QETKDSEDDATKKMKIK. 2 disordered regions span residues 1-38 and 203-256; these read MSEKESPSPQHKKDEVVDDTEQETKDSEDDATKKMKIK and EKEK…SNGV. A DNA-binding region (homeobox) is located at residues 144–203; sequence RRKRRVLFSQAQVYELERRFKQAKYLTAPEREQLANSIRLTPTQVKIWFQNHRYKCKRQE.

Belongs to the NK-2 homeobox family. In terms of tissue distribution, expressed in the 8 vulval muscles, 8-10 ventral neurons in the head and in the most posterior pharyngeal muscle cell, m8.

The protein resides in the nucleus. In terms of biological role, probable transcriptional regulator that is required in neural development for the normal formation of sublateral cholinergic motor neuron processes. Plays a role in regulating the expression of acetylcholine transporter protein unc-17 in the sublateral processes. In particular, it is required in sublateral motor neurons for a left-right turning behavior that occurs during the lethargus phase of the normal sleep process called 'flipping'. During 'flipping' animals rotate 180 degrees about their longitudinal axis. In Caenorhabditis briggsae, this protein is Homeobox protein ceh-24.